The chain runs to 779 residues: Pleckstrin homology domain-containing family A member 4 (779 aa).

The PH domain maps to 54–153; it reads PVHIRGWLHK…WLRALGKASR (100 aa). Disordered stretches follow at residues 152–355, 495–669, and 694–766; these read SRAE…LPGP, AGLG…SGGH, and SPER…QEEG. At Ser-164 the chain carries Phosphoserine. Over residues 183 to 193 the composition is skewed to basic and acidic residues; it reads VNRREEGRTSE. Low complexity-rich tracts occupy residues 246–259 and 324–334; these read PRPR…PPLS and QSTQVSSGSST. Positions 517–527 are enriched in basic and acidic residues; that stretch reads QREESSERESL. Positions 528-540 are enriched in low complexity; sequence SESLELSSPQSPE. Ser-562 carries the post-translational modification Phosphoserine. The segment covering 567 to 580 has biased composition (polar residues); it reads RASSPECRQQSSPL. Low complexity-rich tracts occupy residues 608-627 and 649-659; these read GLSL…RTLS and SSGSWSSPRHS. Residues 720–740 are compositionally biased toward polar residues; the sequence is VTSSPTSHKANSATTGFSCQG.

It localises to the cytoplasm. Its subcellular location is the membrane. Functionally, binds specifically to phosphatidylinositol 3-phosphate (PtdIns3P), but not to other phosphoinositides. In Rattus norvegicus (Rat), this protein is Pleckstrin homology domain-containing family A member 4 (Plekha4).